We begin with the raw amino-acid sequence, 343 residues long: Single-pass membrane and coiled-coil domain-containing protein 2 (343 aa).

The segment covering E86–T99 has biased composition (basic and acidic residues). A disordered region spans residues E86–S108. Residues T152–E238 are a coiled coil. Residues I284 to G304 traverse the membrane as a helical segment.

Its subcellular location is the membrane. This is Single-pass membrane and coiled-coil domain-containing protein 2 (SMCO2) from Homo sapiens (Human).